The sequence spans 215 residues: Porin MspB (215 aa).

The first 31 residues, 1-31 (MTAFKRVLIAMISALLAGTTGMFVSAGAAHA), serve as a signal peptide directing secretion.

This sequence belongs to the mycobacterial porin (TC 1.B.24) family. In terms of assembly, octamers. Probably forms a goblet with the wide end on the exterior of the outer membrane and a central channel. It is not known if mixed oligomers of MspB with other Msp subunits form in vivo.

The protein resides in the cell outer membrane. It localises to the secreted. The protein localises to the cell wall. Its function is as follows. A backup porin induced when MspA, the major porin, is deleted. Probably forms a water-filled channel which favors the permeation of cations. There are about 2400 porins in wild-type, 800 in an mspA deletion and 150 in a double mspA-mspC deletion. A triple mspA-mspC-mspD deletion mutant has low but detectable channel activity. Different conductance values with maxima at 2.3 and 4.6 nanosiemens might be caused by a simultaneous reconstitution of MspB channels into the membrane or by the existence of different MspB conformations. This is Porin MspB (mspB) from Mycolicibacterium smegmatis (strain ATCC 700084 / mc(2)155) (Mycobacterium smegmatis).